The sequence spans 210 residues: Ribosomal RNA large subunit methyltransferase E (210 aa).

The S-adenosyl-L-methionine site is built by Gly60, Trp62, Asp85, Asp101, and Asp126. Lys166 acts as the Proton acceptor in catalysis. The segment covering 191-200 (KPKASRDKSS) has biased composition (basic and acidic residues). Residues 191-210 (KPKASRDKSSETFLVARDLK) are disordered.

This sequence belongs to the class I-like SAM-binding methyltransferase superfamily. RNA methyltransferase RlmE family.

The protein localises to the cytoplasm. It carries out the reaction uridine(2552) in 23S rRNA + S-adenosyl-L-methionine = 2'-O-methyluridine(2552) in 23S rRNA + S-adenosyl-L-homocysteine + H(+). Specifically methylates the uridine in position 2552 of 23S rRNA at the 2'-O position of the ribose in the fully assembled 50S ribosomal subunit. This is Ribosomal RNA large subunit methyltransferase E from Bordetella bronchiseptica (strain ATCC BAA-588 / NCTC 13252 / RB50) (Alcaligenes bronchisepticus).